Consider the following 190-residue polypeptide: Zinc metalloproteinase/disintegrin (190 aa).

The region spanning 1–11 (NHNPECIVNEP) is the Peptidase M12B domain. Residues 19 to 105 (PPVCGNELLE…ECPADVFHKN (87 aa)) form the Disintegrin domain. Residues Val-21, Asn-24, Leu-26, Glu-28, Glu-31, and Asp-34 each coordinate Ca(2+). Intrachain disulfides connect Cys-33/Cys-51, Cys-35/Cys-46, Cys-45/Cys-68, Cys-59/Cys-65, Cys-64/Cys-90, and Cys-77/Cys-97. The D/ECD-tripeptide signature appears at 83-85 (ECD). Residues Asp-85, Pro-86, Glu-88, Asp-100, and Val-101 each coordinate Ca(2+). A propeptide spanning residues 104–190 (KNGQPCLDNY…DNSPGQNGPC (87 aa)) is cleaved from the precursor.

Belongs to the venom metalloproteinase (M12B) family. P-III subfamily. In terms of assembly, monomer. It depends on Zn(2+) as a cofactor. As to expression, expressed by the venom gland.

The protein resides in the secreted. Impairs hemostasis in the envenomed animal. Functionally, inhibits platelet aggregation induced by ADP, thrombin, platelet-activating factor and collagen. Acts by inhibiting fibrinogen interaction with platelet receptors GPIIb/GPIIIa (ITGA2B/ITGB3). In Gloydius brevicauda (Korean slamosa snake), this protein is Zinc metalloproteinase/disintegrin.